A 499-amino-acid chain; its full sequence is NAD(P)H-quinone oxidoreductase chain 4, chloroplastic (499 aa).

The next 14 helical transmembrane spans lie at 4 to 24 (FPWL…IPFL), 31 to 51 (IIRW…TYIF), 87 to 107 (IGLI…AWPV), 113 to 133 (LFYF…ASQD), 134 to 154 (ILLF…LLAM), 167 to 187 (FILY…IMAF), 211 to 231 (IIIY…IPFH), 242 to 262 (HYST…YGLI), 274 to 294 (SFFA…AALT), 310 to 330 (VSHM…GLNG), 331 to 351 (AILQ…LAGI), 385 to 405 (SLAL…LGVI), 416 to 436 (IIII…LLSM), and 462 to 482 (IFIL…PNFV).

This sequence belongs to the complex I subunit 4 family.

It localises to the plastid. The protein localises to the chloroplast thylakoid membrane. It carries out the reaction a plastoquinone + NADH + (n+1) H(+)(in) = a plastoquinol + NAD(+) + n H(+)(out). The enzyme catalyses a plastoquinone + NADPH + (n+1) H(+)(in) = a plastoquinol + NADP(+) + n H(+)(out). The sequence is that of NAD(P)H-quinone oxidoreductase chain 4, chloroplastic (ndhD) from Marchantia polymorpha (Common liverwort).